The chain runs to 141 residues: Transcriptional regulator MraZ (141 aa).

SpoVT-AbrB domains follow at residues 5-47 (TFNL…KPAD) and 76-119 (ANLV…DKVQ).

Belongs to the MraZ family. As to quaternary structure, forms oligomers.

The protein localises to the cytoplasm. It is found in the nucleoid. This Mycoplasma genitalium (strain ATCC 33530 / DSM 19775 / NCTC 10195 / G37) (Mycoplasmoides genitalium) protein is Transcriptional regulator MraZ.